We begin with the raw amino-acid sequence, 766 residues long: Leucine-rich repeat and fibronectin type III domain-containing protein 1 (766 aa).

An N-terminal signal peptide occupies residues 1–31 (MAPGPFSSGLFSPPPAALPFLLLLWAGASRG). Residues 32–65 (QPCPGRCICQNVAPTLTMLCAKTGLLFVPPAIDR) form the LRRNT domain. Residues 32-536 (QPCPGRCICQ…LRAHFLGGTM (505 aa)) lie on the Extracellular side of the membrane. LRR repeat units lie at residues 66-87 (RVVELRLTDNFIAAVRRRDFAN), 90-111 (SLVHLTLSRNTIGQVAAGAFAD), 114-135 (ALRALHLDSNRLAEVRGDQLRG), 138-159 (NLRHLILGNNQIRKVESAAFDA), 163-184 (TVEDLDLSYNNLEALPWEAVGQ), 187-208 (NLNTLTLDHNLIDHIAEGTFVQ), and 211-232 (KLVRLDMTSNRLHKLPPDGLFL). Residue Asn-87 is glycosylated (N-linked (GlcNAc...) asparagine). An LRRCT domain is found at 252-298 (NPLHCNCELLWLRRLTREDDLETCATPEHLTDRYFWSIPEEEFLCEP). The Ig-like domain maps to 299–386 (PLITRQAGGR…GEATAPVEVC (88 aa)). Residues Cys-321 and Cys-370 are joined by a disulfide bond. N-linked (GlcNAc...) asparagine glycosylation occurs at Asn-343. A disordered region spans residues 397–424 (PAAPPPLTEPGSSDIATPGRPGANDSTS). Positions 424 to 520 (SERRLVAAEL…GCVQFTTAGD (97 aa)) constitute a Fibronectin type-III domain. The helical transmembrane segment at 537–557 (IIAIGGVIVASVLVFIVLLMI) threads the bilayer. Residues 558-766 (RYKVYGDGDS…STEWMLESTV (209 aa)) are Cytoplasmic-facing. Disordered regions lie at residues 568–601 (RRIKGTSRTPPRVSHVCSQTNGAGAQQASAPPAP) and 645–742 (LCLL…GEDG). Ser-713 is subject to Phosphoserine. Positions 714–727 (YPRRARRTKRHRST) are enriched in basic residues. Residues 763–766 (ESTV) carry the PDZ-binding motif.

The protein belongs to the LRFN family. As to quaternary structure, can form heteromeric complexes with LRFN2, LRFN3, LRFN4 and LRFN5. Forms homomeric complexes, but not across cell junctions. Interacts with DLG4. Also interacts with DLG1, DLG2, and DLG3. Interacts with 2 AMPA receptor subunits GRIA1 and GRIA2 and NMDA receptor subunit GRIN1. Glycosylated. Predominantly expressed in the brain, with a weak, but broad expression in the cerebral cortex and diencephalic nuclei. Also detected in other parts of the central nervous system, including the olfactory bulb, pons, cerebellum, and medulla oblongata, as well as in the peripheral nervous system, such as the ganglia of cranial nerves and the dorsal root ganglion during gestation.

The protein localises to the membrane. It localises to the synapse. It is found in the postsynaptic density membrane. In terms of biological role, promotes neurite outgrowth in hippocampal neurons. Involved in the regulation and maintenance of excitatory synapses. Induces the clustering of excitatory postsynaptic proteins, including DLG4, DLGAP1, GRIA1 and GRIN1. This chain is Leucine-rich repeat and fibronectin type III domain-containing protein 1 (Lrfn1), found in Mus musculus (Mouse).